A 71-amino-acid chain; its full sequence is SRY-related protein LG28 (71 aa).

The segment at residues 1 to 68 (VKRPMNAFMV…KHMADYPDYK (68 aa)) is a DNA-binding region (HMG box).

The protein localises to the nucleus. The sequence is that of SRY-related protein LG28 from Eublepharis macularius (Leopard gecko).